Here is a 122-residue protein sequence, read N- to C-terminus: Large ribosomal subunit protein uL18 (122 aa).

It belongs to the universal ribosomal protein uL18 family. Part of the 50S ribosomal subunit; part of the 5S rRNA/L5/L18/L25 subcomplex. Contacts the 5S and 23S rRNAs.

Functionally, this is one of the proteins that bind and probably mediate the attachment of the 5S RNA into the large ribosomal subunit, where it forms part of the central protuberance. In Mycobacterium avium (strain 104), this protein is Large ribosomal subunit protein uL18.